Consider the following 393-residue polypeptide: Riboflavin biosynthesis protein RibBA (393 aa).

The DHBP synthase stretch occupies residues 1–200; the sequence is MQLDSIDTAL…IEDLEKYRKS (200 aa). D-ribulose 5-phosphate contacts are provided by residues 27–28, aspartate 32, 139–143, and glutamate 163; these read RE and RRGHT. Glutamate 28 is a binding site for Mg(2+). Histidine 142 is a binding site for Mg(2+). The GTP cyclohydrolase II stretch occupies residues 201–393; sequence SISKLDAKAK…TKKEKMGHLI (193 aa). 249 to 253 provides a ligand contact to GTP; it reads RIHSA. 3 residues coordinate Zn(2+): cysteine 254, cysteine 265, and cysteine 267. Residues glutamine 270, 291–293, and threonine 313 contribute to the GTP site; that span reads EGR. Residue aspartate 325 is the Proton acceptor; for GTP cyclohydrolase activity of the active site. Arginine 327 (nucleophile; for GTP cyclohydrolase activity) is an active-site residue. Serine 348 and lysine 353 together coordinate GTP.

The protein in the N-terminal section; belongs to the DHBP synthase family. It in the C-terminal section; belongs to the GTP cyclohydrolase II family. The cofactor is Mg(2+). Requires Mn(2+) as cofactor. It depends on Zn(2+) as a cofactor.

The catalysed reaction is D-ribulose 5-phosphate = (2S)-2-hydroxy-3-oxobutyl phosphate + formate + H(+). It carries out the reaction GTP + 4 H2O = 2,5-diamino-6-hydroxy-4-(5-phosphoribosylamino)-pyrimidine + formate + 2 phosphate + 3 H(+). Its pathway is cofactor biosynthesis; riboflavin biosynthesis; 2-hydroxy-3-oxobutyl phosphate from D-ribulose 5-phosphate: step 1/1. The protein operates within cofactor biosynthesis; riboflavin biosynthesis; 5-amino-6-(D-ribitylamino)uracil from GTP: step 1/4. In terms of biological role, catalyzes the conversion of D-ribulose 5-phosphate to formate and 3,4-dihydroxy-2-butanone 4-phosphate. Its function is as follows. Catalyzes the conversion of GTP to 2,5-diamino-6-ribosylamino-4(3H)-pyrimidinone 5'-phosphate (DARP), formate and pyrophosphate. This chain is Riboflavin biosynthesis protein RibBA, found in Staphylococcus saprophyticus subsp. saprophyticus (strain ATCC 15305 / DSM 20229 / NCIMB 8711 / NCTC 7292 / S-41).